An 87-amino-acid chain; its full sequence is Phosphoribosyl-ATP pyrophosphatase (87 aa).

Belongs to the PRA-PH family.

The protein localises to the cytoplasm. It catalyses the reaction 1-(5-phospho-beta-D-ribosyl)-ATP + H2O = 1-(5-phospho-beta-D-ribosyl)-5'-AMP + diphosphate + H(+). It participates in amino-acid biosynthesis; L-histidine biosynthesis; L-histidine from 5-phospho-alpha-D-ribose 1-diphosphate: step 2/9. In Beutenbergia cavernae (strain ATCC BAA-8 / DSM 12333 / CCUG 43141 / JCM 11478 / NBRC 16432 / NCIMB 13614 / HKI 0122), this protein is Phosphoribosyl-ATP pyrophosphatase.